A 101-amino-acid chain; its full sequence is Small ribosomal subunit protein uS14 (101 aa).

The protein belongs to the universal ribosomal protein uS14 family. As to quaternary structure, part of the 30S ribosomal subunit. Contacts proteins S3 and S10.

Binds 16S rRNA, required for the assembly of 30S particles and may also be responsible for determining the conformation of the 16S rRNA at the A site. The protein is Small ribosomal subunit protein uS14 of Shewanella piezotolerans (strain WP3 / JCM 13877).